Consider the following 1399-residue polypeptide: DNA-directed RNA polymerase subunit beta' (1399 aa).

Zn(2+) is bound by residues cysteine 71, cysteine 73, cysteine 86, and cysteine 89. Positions 462, 464, and 466 each coordinate Mg(2+). Residues cysteine 810, cysteine 884, cysteine 891, and cysteine 894 each contribute to the Zn(2+) site. The interval lysine 1379–glutamate 1399 is disordered. Pro residues predominate over residues glutamine 1387–glutamate 1399.

Belongs to the RNA polymerase beta' chain family. In terms of assembly, the RNAP catalytic core consists of 2 alpha, 1 beta, 1 beta' and 1 omega subunit. When a sigma factor is associated with the core the holoenzyme is formed, which can initiate transcription. The cofactor is Mg(2+). Zn(2+) serves as cofactor.

The enzyme catalyses RNA(n) + a ribonucleoside 5'-triphosphate = RNA(n+1) + diphosphate. In terms of biological role, DNA-dependent RNA polymerase catalyzes the transcription of DNA into RNA using the four ribonucleoside triphosphates as substrates. In Bradyrhizobium sp. (strain ORS 278), this protein is DNA-directed RNA polymerase subunit beta'.